The primary structure comprises 228 residues: Thermonuclease (228 aa).

The signal sequence occupies residues Met1 to Ala23. The propeptide occupies Ile24 to Ala60. Residues Ala58 to Ser70 show a composition bias toward polar residues. Positions Ala58–Thr83 are disordered. Asp100 provides a ligand contact to Ca(2+). Arg114 is a catalytic residue. Ca(2+) contacts are provided by Asp119 and Thr120. Residues Glu122 and Arg166 contribute to the active site.

It belongs to the thermonuclease family. Ca(2+) serves as cofactor.

The protein resides in the secreted. The catalysed reaction is Endonucleolytic cleavage to nucleoside 3'-phosphates and 3'-phosphooligonucleotide end-products.. Enzyme that catalyzes the hydrolysis of both DNA and RNA at the 5' position of the phosphodiester bond. The chain is Thermonuclease (nuc) from Staphylococcus aureus (strain COL).